The sequence spans 503 residues: Pentatricopeptide repeat-containing protein At2g30100, chloroplastic (503 aa).

A chloroplast-targeting transit peptide spans 1-50 (MAYAHVFASLTISTISLRRFLPRLHRNHSVKPNSRIICNLKLNYSAGKFR). 3 PPR repeats span residues 341-375 (IGVVHERLLAMYICAGRGPEAEKQLWKMKLAGREP), 376-410 (EADLHDIVMAICASQKEVNAVSRLLTRVEFMGSQR), and 411-445 (KKKTLSWLLRGYVKGGHFEEAAETLVSMIDSGLHP).

Belongs to the PPR family. P subfamily.

It localises to the plastid. The protein resides in the chloroplast. This Arabidopsis thaliana (Mouse-ear cress) protein is Pentatricopeptide repeat-containing protein At2g30100, chloroplastic.